The sequence spans 433 residues: Aspartate--tRNA(Asp/Asn) ligase (433 aa).

Residue E167 participates in L-aspartate binding. The interval 189 to 192 is aspartate; the sequence is QLFK. R211 serves as a coordination point for L-aspartate. ATP is bound by residues 211-213, 219-221, and E356; these read RAE and RHL. Positions 356 and 359 each coordinate Mg(2+). L-aspartate is bound by residues S359 and R363. 404–407 serves as a coordination point for ATP; it reads GGER.

This sequence belongs to the class-II aminoacyl-tRNA synthetase family. Type 2 subfamily. As to quaternary structure, homodimer. Requires Mg(2+) as cofactor.

Its subcellular location is the cytoplasm. It catalyses the reaction tRNA(Asx) + L-aspartate + ATP = L-aspartyl-tRNA(Asx) + AMP + diphosphate. Its function is as follows. Aspartyl-tRNA synthetase with relaxed tRNA specificity since it is able to aspartylate not only its cognate tRNA(Asp) but also tRNA(Asn). Reaction proceeds in two steps: L-aspartate is first activated by ATP to form Asp-AMP and then transferred to the acceptor end of tRNA(Asp/Asn). The sequence is that of Aspartate--tRNA(Asp/Asn) ligase from Natronomonas pharaonis (strain ATCC 35678 / DSM 2160 / CIP 103997 / JCM 8858 / NBRC 14720 / NCIMB 2260 / Gabara) (Halobacterium pharaonis).